The chain runs to 219 residues: Multiple organellar RNA editing factor 2, chloroplastic (219 aa).

A chloroplast-targeting transit peptide spans 1–48; the sequence is MALPLSGTRHLTRALLSNVTLMAPPRIPSSVHYGGSRLGCSTRFFSIR. Positions 182 to 219 are disordered; the sequence is VQRSPERQRRVEPQPQRAQDRPRYNDRTRYSRRRENTR. Residues 185 to 219 are compositionally biased toward basic and acidic residues; that stretch reads SPERQRRVEPQPQRAQDRPRYNDRTRYSRRRENTR.

The protein belongs to the MORF family. In terms of assembly, homodimer and heterodimer with MORF9. Interacts with protoporphyrinogen oxidase 1 PPOX1. Heterodimers with MORF8/RIP1 and MORF9/RIP9. Interacts with PCMP-A2/PMD1. Interacts with ORRM1. Interacts with ORRM6.

It localises to the plastid. It is found in the chloroplast. Involved in plastid rRNA processing and consequently in translation and early chloroplast differentiation. Involved in organellar RNA editing. Required for the processing of multiple editing sites in plastids. This Arabidopsis thaliana (Mouse-ear cress) protein is Multiple organellar RNA editing factor 2, chloroplastic.